We begin with the raw amino-acid sequence, 293 residues long: 4-hydroxy-tetrahydrodipicolinate synthase (293 aa).

Serine 45 serves as a coordination point for pyruvate. The Proton donor/acceptor role is filled by tyrosine 133. Lysine 161 functions as the Schiff-base intermediate with substrate in the catalytic mechanism. Residue isoleucine 203 participates in pyruvate binding.

The protein belongs to the DapA family. Homotetramer; dimer of dimers.

The protein resides in the cytoplasm. The enzyme catalyses L-aspartate 4-semialdehyde + pyruvate = (2S,4S)-4-hydroxy-2,3,4,5-tetrahydrodipicolinate + H2O + H(+). The protein operates within amino-acid biosynthesis; L-lysine biosynthesis via DAP pathway; (S)-tetrahydrodipicolinate from L-aspartate: step 3/4. Its function is as follows. Catalyzes the condensation of (S)-aspartate-beta-semialdehyde [(S)-ASA] and pyruvate to 4-hydroxy-tetrahydrodipicolinate (HTPA). The chain is 4-hydroxy-tetrahydrodipicolinate synthase from Psychromonas ingrahamii (strain DSM 17664 / CCUG 51855 / 37).